The sequence spans 227 residues: MAHAAQVGLQDATSPIMEELVIFHDHALMIIFLICFLVLYALFLTLTTKLTNTSISDAQEMETIWTILPAIILILIALPSLRILYLTDEINDPSFTIKSIGHQWYWTYEYTDYGGLIFNSYMLPPLFLEPGDLRLLDVDNRVVLPVEAPVRMMITSQDVLHSWTVPSLGLKTDAIPGRLNQTTFTATRPGVYYGQCSEICGANHSFMPIVLELIPLKIFEMGPVFTL.

Residues 1-14 are Mitochondrial intermembrane-facing; it reads MAHAAQVGLQDATS. A helical membrane pass occupies residues 15–45; sequence PIMEELVIFHDHALMIIFLICFLVLYALFLT. Residues 46–59 are Mitochondrial matrix-facing; that stretch reads LTTKLTNTSISDAQ. The chain crosses the membrane as a helical span at residues 60 to 87; sequence EMETIWTILPAIILILIALPSLRILYLT. The Mitochondrial intermembrane portion of the chain corresponds to 88 to 227; the sequence is DEINDPSFTI…IFEMGPVFTL (140 aa). Residues His-161, Cys-196, Glu-198, Cys-200, His-204, and Met-207 each coordinate Cu cation. Glu-198 serves as a coordination point for Mg(2+).

This sequence belongs to the cytochrome c oxidase subunit 2 family. Component of the cytochrome c oxidase (complex IV, CIV), a multisubunit enzyme composed of 14 subunits. The complex is composed of a catalytic core of 3 subunits MT-CO1, MT-CO2 and MT-CO3, encoded in the mitochondrial DNA, and 11 supernumerary subunits COX4I, COX5A, COX5B, COX6A, COX6B, COX6C, COX7A, COX7B, COX7C, COX8 and NDUFA4, which are encoded in the nuclear genome. The complex exists as a monomer or a dimer and forms supercomplexes (SCs) in the inner mitochondrial membrane with NADH-ubiquinone oxidoreductase (complex I, CI) and ubiquinol-cytochrome c oxidoreductase (cytochrome b-c1 complex, complex III, CIII), resulting in different assemblies (supercomplex SCI(1)III(2)IV(1) and megacomplex MCI(2)III(2)IV(2)). Found in a complex with TMEM177, COA6, COX18, COX20, SCO1 and SCO2. Interacts with TMEM177 in a COX20-dependent manner. Interacts with COX20. Interacts with COX16. Cu cation is required as a cofactor.

Its subcellular location is the mitochondrion inner membrane. It carries out the reaction 4 Fe(II)-[cytochrome c] + O2 + 8 H(+)(in) = 4 Fe(III)-[cytochrome c] + 2 H2O + 4 H(+)(out). Its function is as follows. Component of the cytochrome c oxidase, the last enzyme in the mitochondrial electron transport chain which drives oxidative phosphorylation. The respiratory chain contains 3 multisubunit complexes succinate dehydrogenase (complex II, CII), ubiquinol-cytochrome c oxidoreductase (cytochrome b-c1 complex, complex III, CIII) and cytochrome c oxidase (complex IV, CIV), that cooperate to transfer electrons derived from NADH and succinate to molecular oxygen, creating an electrochemical gradient over the inner membrane that drives transmembrane transport and the ATP synthase. Cytochrome c oxidase is the component of the respiratory chain that catalyzes the reduction of oxygen to water. Electrons originating from reduced cytochrome c in the intermembrane space (IMS) are transferred via the dinuclear copper A center (CU(A)) of subunit 2 and heme A of subunit 1 to the active site in subunit 1, a binuclear center (BNC) formed by heme A3 and copper B (CU(B)). The BNC reduces molecular oxygen to 2 water molecules using 4 electrons from cytochrome c in the IMS and 4 protons from the mitochondrial matrix. The sequence is that of Cytochrome c oxidase subunit 2 (MT-CO2) from Pongo abelii (Sumatran orangutan).